A 223-amino-acid chain; its full sequence is Putative thymidylate synthase (223 aa).

Cys-146 is an active-site residue.

Belongs to the thymidylate synthase family. Archaeal-type ThyA subfamily. As to quaternary structure, monomer.

Its subcellular location is the cytoplasm. The protein operates within pyrimidine metabolism; dTTP biosynthesis. In terms of biological role, may catalyze the biosynthesis of dTMP using an unknown cosubstrate. In vitro, also catalyzes the dehalogenation of 5-bromo-deoxyuridine monophosphate (Br-dUMP) and the tritium exchange of [5-3H]deoxyuridine monophosphate ([5-3H]dUMP). The chain is Putative thymidylate synthase (thyA) from Methanothermobacter marburgensis (strain ATCC BAA-927 / DSM 2133 / JCM 14651 / NBRC 100331 / OCM 82 / Marburg) (Methanobacterium thermoautotrophicum).